A 205-amino-acid polypeptide reads, in one-letter code: Large ribosomal subunit protein bL25 (205 aa).

Residues 180–205 (HEEVAEEAEETEGEDAEEAPAAEGEE) form a disordered region. Acidic residues predominate over residues 183-205 (VAEEAEETEGEDAEEAPAAEGEE).

The protein belongs to the bacterial ribosomal protein bL25 family. CTC subfamily. In terms of assembly, part of the 50S ribosomal subunit; part of the 5S rRNA/L5/L18/L25 subcomplex. Contacts the 5S rRNA. Binds to the 5S rRNA independently of L5 and L18.

Its function is as follows. This is one of the proteins that binds to the 5S RNA in the ribosome where it forms part of the central protuberance. The protein is Large ribosomal subunit protein bL25 of Corynebacterium diphtheriae (strain ATCC 700971 / NCTC 13129 / Biotype gravis).